The sequence spans 453 residues: Ribosome biogenesis protein SSF1 (453 aa).

The span at 1-11 shows a compositional bias: basic residues; the sequence is MAKRRQKKRTH. Disordered stretches follow at residues 1 to 22, 275 to 324, and 374 to 453; these read MAKRRQKKRTHAQLTPEQEQGI, KAKH…PRKK, and KMRL…SEVE. The Brix domain maps to 26–348; the sequence is MVIRVGQTSL…LVKIEEGICS (323 aa). The segment covering 288–300 has biased composition (basic and acidic residues); the sequence is PVEKKDNKEREKE. T301 carries the phosphothreonine modification. A compositionally biased stretch (basic and acidic residues) spans 374-398; that stretch reads KMRLKEQRKKEQEENIAKKKAVKDA. Positions 399–409 are enriched in basic residues; sequence KKQRKLERRKA. Positions 410–423 are enriched in basic and acidic residues; sequence RAAEGGEGQGKDDA. Acidic residues predominate over residues 442-453; that stretch reads EDLDSDLFSEVE.

In terms of assembly, part of a complex that includes BRX1, RPF1, RPF2 and SSF1 or SSF2.

Its subcellular location is the nucleus. It is found in the nucleolus. In terms of biological role, required for biogenesis of the 60S ribosomal subunit. This is Ribosome biogenesis protein SSF1 (SSF1) from Saccharomyces cerevisiae (strain ATCC 204508 / S288c) (Baker's yeast).